A 612-amino-acid chain; its full sequence is Lysophospholipase (612 aa).

The signal sequence occupies residues 1-9; the sequence is DITFAGVQR. The region spanning 24 to 571 is the PLA2c domain; that stretch reads SCPASRPTVR…DRYCWNGTVN (548 aa). Residues Asn-41, Asn-81, Asn-116, Asn-150, Asn-223, Asn-267, Asn-306, Asn-335, Asn-427, Asn-440, Asn-446, Asn-477, Asn-498, Asn-526, Asn-532, Asn-567, and Asn-571 are each glycosylated (N-linked (GlcNAc...) asparagine).

The protein belongs to the lysophospholipase family. In terms of processing, N-glycosylated.

It localises to the secreted. The enzyme catalyses a 1-acyl-sn-glycero-3-phosphocholine + H2O = sn-glycerol 3-phosphocholine + a fatty acid + H(+). Its function is as follows. Catalyzes the release of fatty acids from lysophospholipids. This Penicillium chrysogenum (Penicillium notatum) protein is Lysophospholipase.